Reading from the N-terminus, the 218-residue chain is Non-structural protein NS3 (218 aa).

This sequence belongs to the orbivirus NS3 family.

Functionally, may play a role in the release of virions from infected cells. The polypeptide is Non-structural protein NS3 (Segment-10) (Camelus dromedarius (Dromedary)).